We begin with the raw amino-acid sequence, 75 residues long: UPF0346 protein LEUM_0763 (75 aa).

This sequence belongs to the UPF0346 family.

The protein is UPF0346 protein LEUM_0763 of Leuconostoc mesenteroides subsp. mesenteroides (strain ATCC 8293 / DSM 20343 / BCRC 11652 / CCM 1803 / JCM 6124 / NCDO 523 / NBRC 100496 / NCIMB 8023 / NCTC 12954 / NRRL B-1118 / 37Y).